We begin with the raw amino-acid sequence, 255 residues long: Pimeloyl-[acyl-carrier protein] methyl ester esterase (255 aa).

Residues 16–242 (LVLLHGWGMN…SSHAPFITEP (227 aa)) enclose the AB hydrolase-1 domain. Residues tryptophan 22, 82–83 (SL), and 143–147 (FMALQ) each bind substrate. Catalysis depends on serine 82, which acts as the Nucleophile. Residues aspartate 207 and histidine 235 contribute to the active site. Residue histidine 235 coordinates substrate.

This sequence belongs to the AB hydrolase superfamily. Carboxylesterase BioH family. Monomer.

It is found in the cytoplasm. It catalyses the reaction 6-carboxyhexanoyl-[ACP] methyl ester + H2O = 6-carboxyhexanoyl-[ACP] + methanol + H(+). It participates in cofactor biosynthesis; biotin biosynthesis. Functionally, the physiological role of BioH is to remove the methyl group introduced by BioC when the pimeloyl moiety is complete. It allows to synthesize pimeloyl-ACP via the fatty acid synthetic pathway through the hydrolysis of the ester bonds of pimeloyl-ACP esters. This chain is Pimeloyl-[acyl-carrier protein] methyl ester esterase, found in Vibrio vulnificus (strain YJ016).